The following is an 814-amino-acid chain: S-layer protein sap (814 aa).

Positions 1–29 (MAKTNSYKKVIAGTMTAAMVAGVVSPVAA) are cleaved as a signal peptide. SLH domains are found at residues 30–93 (AGKT…DAKP), 94–150 (SFAD…KVNG), and 152–214 (PATK…AAKV). One can recognise a BIG2 domain in the interval 403–479 (FTSKDFKQNN…TVKDSKGKEL (77 aa)).

In terms of processing, probably glycosylated.

The protein localises to the secreted. It localises to the cell wall. It is found in the S-layer. The S-layer is a paracrystalline mono-layered assembly of proteins which coat the surface of bacteria. The protein is S-layer protein sap (sap) of Bacillus anthracis.